The primary structure comprises 758 residues: ATP-dependent RNA helicase dbp7 (758 aa).

Disordered regions lie at residues Gly-26 to Gln-99 and Pro-111 to Asn-130. Over residues Ala-35 to Gly-45 the composition is skewed to basic residues. The span at Gly-84–Gln-99 shows a compositional bias: polar residues. Residues Pro-111–Lys-127 are compositionally biased toward basic and acidic residues. The Q motif motif lies at Asp-138–Lys-167. In terms of domain architecture, Helicase ATP-binding spans Ser-171 to Ile-372. Residue Ala-184 to Thr-191 coordinates ATP. The DEAD box signature appears at Asp-308–Asp-311. In terms of domain architecture, Helicase C-terminal spans Gln-398 to Ile-603. Disordered stretches follow at residues Lys-455–Thr-483 and Val-691–Ala-758. Positions Gln-696–Arg-709 are enriched in basic and acidic residues.

Belongs to the DEAD box helicase family. DDX31/DBP7 subfamily.

Its subcellular location is the nucleus. It localises to the nucleolus. The enzyme catalyses ATP + H2O = ADP + phosphate + H(+). Functionally, ATP-binding RNA helicase involved in the biogenesis of 60S ribosomal subunits and is required for the normal formation of 25S and 5.8S rRNAs. The chain is ATP-dependent RNA helicase dbp7 (dbp7) from Neosartorya fischeri (strain ATCC 1020 / DSM 3700 / CBS 544.65 / FGSC A1164 / JCM 1740 / NRRL 181 / WB 181) (Aspergillus fischerianus).